The following is a 65-amino-acid chain: Conotoxin Bu19 (65 aa).

An N-terminal signal peptide occupies residues M1–S21. Residues F22–R48 constitute a propeptide that is removed on maturation. Disulfide bonds link C50/C56 and C51/C64. C64 is subject to Cysteine amide.

This sequence belongs to the conotoxin A superfamily. As to expression, expressed by the venom duct.

It is found in the secreted. The polypeptide is Conotoxin Bu19 (Conus bullatus (Bubble cone)).